The primary structure comprises 288 residues: Phosphatidylserine decarboxylase proenzyme (288 aa).

Active-site charge relay system; for autoendoproteolytic cleavage activity residues include Asp-88, His-145, and Ser-248. Catalysis depends on Ser-248, which acts as the Schiff-base intermediate with substrate; via pyruvic acid; for decarboxylase activity. Residue Ser-248 is modified to Pyruvic acid (Ser); by autocatalysis.

The protein belongs to the phosphatidylserine decarboxylase family. PSD-B subfamily. Prokaryotic type I sub-subfamily. Heterodimer of a large membrane-associated beta subunit and a small pyruvoyl-containing alpha subunit. Pyruvate is required as a cofactor. In terms of processing, is synthesized initially as an inactive proenzyme. Formation of the active enzyme involves a self-maturation process in which the active site pyruvoyl group is generated from an internal serine residue via an autocatalytic post-translational modification. Two non-identical subunits are generated from the proenzyme in this reaction, and the pyruvate is formed at the N-terminus of the alpha chain, which is derived from the carboxyl end of the proenzyme. The autoendoproteolytic cleavage occurs by a canonical serine protease mechanism, in which the side chain hydroxyl group of the serine supplies its oxygen atom to form the C-terminus of the beta chain, while the remainder of the serine residue undergoes an oxidative deamination to produce ammonia and the pyruvoyl prosthetic group on the alpha chain. During this reaction, the Ser that is part of the protease active site of the proenzyme becomes the pyruvoyl prosthetic group, which constitutes an essential element of the active site of the mature decarboxylase.

It localises to the cell membrane. It catalyses the reaction a 1,2-diacyl-sn-glycero-3-phospho-L-serine + H(+) = a 1,2-diacyl-sn-glycero-3-phosphoethanolamine + CO2. It functions in the pathway phospholipid metabolism; phosphatidylethanolamine biosynthesis; phosphatidylethanolamine from CDP-diacylglycerol: step 2/2. Its function is as follows. Catalyzes the formation of phosphatidylethanolamine (PtdEtn) from phosphatidylserine (PtdSer). In Azoarcus sp. (strain BH72), this protein is Phosphatidylserine decarboxylase proenzyme.